Here is a 225-residue protein sequence, read N- to C-terminus: UPF0758 protein Sbal223_0402 (225 aa).

The MPN domain maps to 102 to 224 (VLTNPDLTRD…IVSFAERGWI (123 aa)). Zn(2+) contacts are provided by H173, H175, and D186. Positions 173-186 (HNHPSGIAEPSQAD) match the JAMM motif motif.

Belongs to the UPF0758 family.

The sequence is that of UPF0758 protein Sbal223_0402 from Shewanella baltica (strain OS223).